Reading from the N-terminus, the 128-residue chain is Small ribosomal subunit protein bS6 (128 aa).

The interval 105–128 (AKVTEEEPVEAAPEAKVETTTEEE) is disordered. The span at 117–128 (PEAKVETTTEEE) shows a compositional bias: basic and acidic residues.

This sequence belongs to the bacterial ribosomal protein bS6 family.

Binds together with bS18 to 16S ribosomal RNA. The sequence is that of Small ribosomal subunit protein bS6 from Geotalea daltonii (strain DSM 22248 / JCM 15807 / FRC-32) (Geobacter daltonii).